The sequence spans 104 residues: Small ribosomal subunit protein uS10 (104 aa).

It belongs to the universal ribosomal protein uS10 family. In terms of assembly, part of the 30S ribosomal subunit.

Its function is as follows. Involved in the binding of tRNA to the ribosomes. This Alkaliphilus metalliredigens (strain QYMF) protein is Small ribosomal subunit protein uS10.